The chain runs to 152 residues: MNNILVINGPNLNLLGKREPDIYGNITLENINQKIKLHFKNEDLKIDFFQSNEEGKIIDKIIESEKKYNAIVINPAAYSHYSIAILDAMRSINIPVVEVHLSNIYKREEYRKKSVTAEASLGVISGFGYYGYIMAIEFILNNLVRENNIVVH.

The active-site Proton acceptor is Tyr23. The substrate site is built by Asn74, His80, and Asp87. The active-site Proton donor is the His100. Substrate is bound by residues 101–102 and Arg111; that span reads LS.

This sequence belongs to the type-II 3-dehydroquinase family. Homododecamer.

It carries out the reaction 3-dehydroquinate = 3-dehydroshikimate + H2O. The protein operates within metabolic intermediate biosynthesis; chorismate biosynthesis; chorismate from D-erythrose 4-phosphate and phosphoenolpyruvate: step 3/7. Catalyzes a trans-dehydration via an enolate intermediate. In Clostridium botulinum (strain Langeland / NCTC 10281 / Type F), this protein is 3-dehydroquinate dehydratase.